Here is a 466-residue protein sequence, read N- to C-terminus: Chromosomal replication initiator protein DnaA (466 aa).

The tract at residues 1 to 86 (MSLSLWQQCL…EVGTKPVTQT (86 aa)) is domain I, interacts with DnaA modulators. Residues 86–129 (TLKTPVHNVVAPAQTTTAQPQRVAPAARSGWDNVPAPAEPTYRS) are domain II. Positions 130–346 (NVNVKHTFDN…GALNRVIANA (217 aa)) are domain III, AAA+ region. The ATP site is built by Gly-174, Gly-176, Lys-177, and Thr-178. The domain IV, binds dsDNA stretch occupies residues 347-466 (NFTGRAITID…FSNLIRTLSS (120 aa)).

It belongs to the DnaA family. As to quaternary structure, oligomerizes as a right-handed, spiral filament on DNA at oriC.

The protein localises to the cytoplasm. Functionally, plays an essential role in the initiation and regulation of chromosomal replication. ATP-DnaA binds to the origin of replication (oriC) to initiate formation of the DNA replication initiation complex once per cell cycle. Binds the DnaA box (a 9 base pair repeat at the origin) and separates the double-stranded (ds)DNA. Forms a right-handed helical filament on oriC DNA; dsDNA binds to the exterior of the filament while single-stranded (ss)DNA is stabiized in the filament's interior. The ATP-DnaA-oriC complex binds and stabilizes one strand of the AT-rich DNA unwinding element (DUE), permitting loading of DNA polymerase. After initiation quickly degrades to an ADP-DnaA complex that is not apt for DNA replication. Binds acidic phospholipids. This is Chromosomal replication initiator protein DnaA from Salmonella agona (strain SL483).